The following is a 310-amino-acid chain: 5'-adenylylsulfate reductase-like 4 (310 aa).

The N-terminal stretch at 1–22 (MEKEILLLLLVIMFLTVADVDA) is a signal peptide. The Thioredoxin domain maps to 49 to 168 (GVESDERPRF…LVAFYSDVTG (120 aa)). N143 and N190 each carry an N-linked (GlcNAc...) asparagine glycan. A helical transmembrane segment spans residues 217–237 (LAIVFVLLRLLHLIYPTLVVF).

It is found in the membrane. This is 5'-adenylylsulfate reductase-like 4 (APRL4) from Arabidopsis thaliana (Mouse-ear cress).